The chain runs to 231 residues: Flagellar L-ring protein (231 aa).

The first 18 residues, 1–18, serve as a signal peptide directing secretion; it reads MKRFVSVVALSGVVSLAG. C19 carries N-palmitoyl cysteine lipidation. The S-diacylglycerol cysteine moiety is linked to residue C19.

It belongs to the FlgH family. As to quaternary structure, the basal body constitutes a major portion of the flagellar organelle and consists of four rings (L,P,S, and M) mounted on a central rod.

It is found in the cell outer membrane. It localises to the bacterial flagellum basal body. In terms of biological role, assembles around the rod to form the L-ring and probably protects the motor/basal body from shearing forces during rotation. This is Flagellar L-ring protein from Pseudomonas fluorescens (strain Pf0-1).